The primary structure comprises 189 residues: Inosine triphosphate pyrophosphatase (189 aa).

Position 8-13 (8-13) interacts with ITP; sequence TGNANK. A Mg(2+)-binding site is contributed by Glu39. Residues Lys51, 67–68, Lys84, 143–146, Lys167, and 172–173 each bind ITP; these read DT, FGWD, and HR.

This sequence belongs to the HAM1 NTPase family. Homodimer. Mg(2+) serves as cofactor. The cofactor is Mn(2+).

The protein resides in the cytoplasm. Its subcellular location is the nucleus. The catalysed reaction is ITP + H2O = IMP + diphosphate + H(+). It carries out the reaction dITP + H2O = dIMP + diphosphate + H(+). The enzyme catalyses XTP + H2O = XMP + diphosphate + H(+). Pyrophosphatase that hydrolyzes non-canonical purine nucleotides such as inosine triphosphate (ITP), deoxyinosine triphosphate (dITP) or xanthosine 5'-triphosphate (XTP) to their respective monophosphate derivatives. The enzyme does not distinguish between the deoxy- and ribose forms. Probably excludes non-canonical purines from RNA and DNA precursor pools, thus preventing their incorporation into RNA and DNA and avoiding chromosomal lesions. The polypeptide is Inosine triphosphate pyrophosphatase (Cryptococcus neoformans var. neoformans serotype D (strain JEC21 / ATCC MYA-565) (Filobasidiella neoformans)).